A 394-amino-acid polypeptide reads, in one-letter code: RILP-like protein 1 (394 aa).

In terms of domain architecture, RH1 spans 2-89 (EGISALEKNV…RLERMDRIEK (88 aa)). Positions 68–327 (EMEELRLELD…EAEEENKLPQ (260 aa)) form a coiled coil. The 66-residue stretch at 282–347 (RPRFTLQELR…IPQESGIKRL (66 aa)) folds into the RH2 domain.

This sequence belongs to the RILPL family.

Its subcellular location is the cytoplasm. The protein resides in the cytosol. The protein localises to the cytoskeleton. It localises to the microtubule organizing center. It is found in the centrosome. Its subcellular location is the cell projection. The protein resides in the cilium. In terms of biological role, plays a role in the regulation of cell shape and polarity. Plays a role in cellular protein transport, including protein transport away from primary cilia. Neuroprotective protein. This chain is RILP-like protein 1 (rilpl1), found in Xenopus laevis (African clawed frog).